The chain runs to 359 residues: Chorismate synthase (359 aa).

2 residues coordinate NADP(+): R48 and R54. Residues 125 to 127, 243 to 244, G283, 298 to 302, and R324 contribute to the FMN site; these read RSS, NA, and KPTSS.

It belongs to the chorismate synthase family. As to quaternary structure, homotetramer. It depends on FMNH2 as a cofactor.

It carries out the reaction 5-O-(1-carboxyvinyl)-3-phosphoshikimate = chorismate + phosphate. Its pathway is metabolic intermediate biosynthesis; chorismate biosynthesis; chorismate from D-erythrose 4-phosphate and phosphoenolpyruvate: step 7/7. Functionally, catalyzes the anti-1,4-elimination of the C-3 phosphate and the C-6 proR hydrogen from 5-enolpyruvylshikimate-3-phosphate (EPSP) to yield chorismate, which is the branch point compound that serves as the starting substrate for the three terminal pathways of aromatic amino acid biosynthesis. This reaction introduces a second double bond into the aromatic ring system. In Mannheimia succiniciproducens (strain KCTC 0769BP / MBEL55E), this protein is Chorismate synthase.